The following is a 564-amino-acid chain: Dihydroxy-acid dehydratase (564 aa).

Asp80 contributes to the Mg(2+) binding site. Cys121 contributes to the [2Fe-2S] cluster binding site. Positions 122 and 123 each coordinate Mg(2+). Lys123 carries the post-translational modification N6-carboxylysine. Cys194 contacts [2Fe-2S] cluster. Residue Glu447 participates in Mg(2+) binding. Ser473 acts as the Proton acceptor in catalysis.

This sequence belongs to the IlvD/Edd family. Homodimer. The cofactor is [2Fe-2S] cluster. It depends on Mg(2+) as a cofactor.

The enzyme catalyses (2R)-2,3-dihydroxy-3-methylbutanoate = 3-methyl-2-oxobutanoate + H2O. It catalyses the reaction (2R,3R)-2,3-dihydroxy-3-methylpentanoate = (S)-3-methyl-2-oxopentanoate + H2O. It participates in amino-acid biosynthesis; L-isoleucine biosynthesis; L-isoleucine from 2-oxobutanoate: step 3/4. Its pathway is amino-acid biosynthesis; L-valine biosynthesis; L-valine from pyruvate: step 3/4. Its function is as follows. Functions in the biosynthesis of branched-chain amino acids. Catalyzes the dehydration of (2R,3R)-2,3-dihydroxy-3-methylpentanoate (2,3-dihydroxy-3-methylvalerate) into 2-oxo-3-methylpentanoate (2-oxo-3-methylvalerate) and of (2R)-2,3-dihydroxy-3-methylbutanoate (2,3-dihydroxyisovalerate) into 2-oxo-3-methylbutanoate (2-oxoisovalerate), the penultimate precursor to L-isoleucine and L-valine, respectively. This chain is Dihydroxy-acid dehydratase, found in Listeria monocytogenes serotype 4a (strain HCC23).